Here is a 311-residue protein sequence, read N- to C-terminus: Dehydrogenase/reductase SDR family member 7C (311 aa).

Residues M1 to G18 form the signal peptide. Residues S47, L49, Y191, K195, and S226 each contribute to the NAD(+) site. The active-site Proton acceptor is the Y191.

The protein belongs to the short-chain dehydrogenases/reductases (SDR) family. Expressed in skeletal muscle and cardiac muscle. Also expressed in liver, kidney, adipocytes and skin.

The protein localises to the sarcoplasmic reticulum membrane. The catalysed reaction is all-trans-retinol + NAD(+) = all-trans-retinal + NADH + H(+). NADH-dependent oxidoreductase which catalyzes the oxidation of all-trans-retinol to all-trans-retinal. Plays a role in the regulation of cardiac and skeletal muscle metabolic functions. Maintains Ca(2+) intracellular homeostasis by repressing Ca(2+) release from the sarcoplasmic reticulum (SR) in myotubes, possibly through local alternations in NAD/NADH or retinol/retinal. Also plays a role in Ca(2+) homeostasis by controlling Ca(2+) overload in the cytosol and the SR in myotubes. Involved in glucose uptake into skeletal muscles and muscle performance by activating PI3K and mTORC2-mediated AKT1 phosphorylation signaling pathways, possibly through the action of its downstream catalytic product all-trans-retinoic acid. This chain is Dehydrogenase/reductase SDR family member 7C, found in Mus musculus (Mouse).